The primary structure comprises 947 residues: Translation initiation factor IF-2 (947 aa).

The tract at residues Leu-47–Arg-332 is disordered. Over residues Ala-86–Leu-95 the composition is skewed to basic and acidic residues. The span at Ala-105–Ala-123 shows a compositional bias: pro residues. The segment covering Ala-131 to Ala-145 has biased composition (low complexity). Composition is skewed to pro residues over residues Pro-146–Pro-171 and Pro-210–Pro-225. A compositionally biased stretch (gly residues) spans Arg-255–Gly-318. Positions Arg-322–Lys-331 are enriched in basic residues. Residues Thr-443–Leu-614 enclose the tr-type G domain. Residues Gly-452–Thr-459 are G1. Gly-452–Thr-459 contributes to the GTP binding site. Residues Gly-477–His-481 are G2. The tract at residues Asp-502–Gly-505 is G3. Residues Asp-502 to His-506 and Asn-556 to Asp-559 each bind GTP. The interval Asn-556–Asp-559 is G4. The segment at Ser-592–Lys-594 is G5.

Belongs to the TRAFAC class translation factor GTPase superfamily. Classic translation factor GTPase family. IF-2 subfamily.

It localises to the cytoplasm. In terms of biological role, one of the essential components for the initiation of protein synthesis. Protects formylmethionyl-tRNA from spontaneous hydrolysis and promotes its binding to the 30S ribosomal subunits. Also involved in the hydrolysis of GTP during the formation of the 70S ribosomal complex. This Mycobacterium marinum (strain ATCC BAA-535 / M) protein is Translation initiation factor IF-2.